A 451-amino-acid polypeptide reads, in one-letter code: NADH-quinone oxidoreductase subunit D (451 aa).

It belongs to the complex I 49 kDa subunit family. As to quaternary structure, NDH-1 is composed of 14 different subunits. Subunits NuoB, C, D, E, F, and G constitute the peripheral sector of the complex.

The protein localises to the cell inner membrane. It carries out the reaction a quinone + NADH + 5 H(+)(in) = a quinol + NAD(+) + 4 H(+)(out). NDH-1 shuttles electrons from NADH, via FMN and iron-sulfur (Fe-S) centers, to quinones in the respiratory chain. The immediate electron acceptor for the enzyme in this species is believed to be a menaquinone. Couples the redox reaction to proton translocation (for every two electrons transferred, four hydrogen ions are translocated across the cytoplasmic membrane), and thus conserves the redox energy in a proton gradient. This chain is NADH-quinone oxidoreductase subunit D, found in Salinibacter ruber (strain DSM 13855 / M31).